The chain runs to 246 residues: Flavin-dependent thymidylate synthase (246 aa).

The region spanning 17–241 (ITVELVKSAA…PLTHAAFNAN (225 aa)) is the ThyX domain. Residues Ser69, 92-94 (RHR), and Glu101 each bind FAD. DUMP-binding positions include 89 to 92 (EFMR), 101 to 105 (EESGR), and Arg173. Positions 92–103 (RHRVGWSYNEES) match the ThyX motif motif. FAD-binding positions include 189-191 (NAR) and His195. Position 200 (Arg200) interacts with dUMP. Residue Arg200 is the Involved in ionization of N3 of dUMP, leading to its activation of the active site.

It belongs to the thymidylate synthase ThyX family. As to quaternary structure, homotetramer. The cofactor is FAD.

It catalyses the reaction dUMP + (6R)-5,10-methylene-5,6,7,8-tetrahydrofolate + NADPH + H(+) = dTMP + (6S)-5,6,7,8-tetrahydrofolate + NADP(+). It functions in the pathway pyrimidine metabolism; dTTP biosynthesis. In terms of biological role, catalyzes the reductive methylation of 2'-deoxyuridine-5'-monophosphate (dUMP) to 2'-deoxythymidine-5'-monophosphate (dTMP) while utilizing 5,10-methylenetetrahydrofolate (mTHF) as the methyl donor, and NADPH and FADH(2) as the reductant. This is Flavin-dependent thymidylate synthase from Streptomyces coelicolor (strain ATCC BAA-471 / A3(2) / M145).